Here is a 175-residue protein sequence, read N- to C-terminus: Translation initiation factor IF-3 (175 aa).

The protein belongs to the IF-3 family. As to quaternary structure, monomer.

Its subcellular location is the cytoplasm. Functionally, IF-3 binds to the 30S ribosomal subunit and shifts the equilibrium between 70S ribosomes and their 50S and 30S subunits in favor of the free subunits, thus enhancing the availability of 30S subunits on which protein synthesis initiation begins. This chain is Translation initiation factor IF-3, found in Staphylococcus aureus (strain MRSA252).